A 221-amino-acid polypeptide reads, in one-letter code: NADH-ubiquinone oxidoreductase chain 4 (221 aa).

The next 6 membrane-spanning stretches (helical) occupy residues 5–25 (YTYIIYVIGVITILYASFSTL), 34–54 (IAYSSVSHAAVYLIGAFSNTI), 61–81 (IALGLAHGFVSSGLFICAGGI), 100–120 (IMPIFSVLFFILALGNSGTPL), 140–160 (ILGVLASTSIVFSAAYTIFMY), and 185–205 (FIMLLVFVILTVLFGIYPAPI).

It belongs to the complex I subunit 4 family.

The protein localises to the mitochondrion membrane. The enzyme catalyses a ubiquinone + NADH + 5 H(+)(in) = a ubiquinol + NAD(+) + 4 H(+)(out). Its function is as follows. Core subunit of the mitochondrial membrane respiratory chain NADH dehydrogenase (Complex I) that is believed to belong to the minimal assembly required for catalysis. Complex I functions in the transfer of electrons from NADH to the respiratory chain. The immediate electron acceptor for the enzyme is believed to be ubiquinone. In Emericella nidulans (Aspergillus nidulans), this protein is NADH-ubiquinone oxidoreductase chain 4 (nd4).